Here is a 122-residue protein sequence, read N- to C-terminus: S-adenosylmethionine decarboxylase proenzyme (122 aa).

Catalysis depends on Ser63, which acts as the Schiff-base intermediate with substrate; via pyruvic acid. The residue at position 63 (Ser63) is a Pyruvic acid (Ser); by autocatalysis. Residue His68 is the Proton acceptor; for processing activity of the active site. Cys83 functions as the Proton donor; for catalytic activity in the catalytic mechanism.

It belongs to the prokaryotic AdoMetDC family. Type 1 subfamily. As to quaternary structure, heterotetramer of two alpha and two beta chains arranged as a dimer of alpha/beta heterodimers. Requires pyruvate as cofactor. Post-translationally, is synthesized initially as an inactive proenzyme. Formation of the active enzyme involves a self-maturation process in which the active site pyruvoyl group is generated from an internal serine residue via an autocatalytic post-translational modification. Two non-identical subunits are generated from the proenzyme in this reaction, and the pyruvate is formed at the N-terminus of the alpha chain, which is derived from the carboxyl end of the proenzyme. The post-translation cleavage follows an unusual pathway, termed non-hydrolytic serinolysis, in which the side chain hydroxyl group of the serine supplies its oxygen atom to form the C-terminus of the beta chain, while the remainder of the serine residue undergoes an oxidative deamination to produce ammonia and the pyruvoyl group blocking the N-terminus of the alpha chain.

The enzyme catalyses S-adenosyl-L-methionine + H(+) = S-adenosyl 3-(methylsulfanyl)propylamine + CO2. Its pathway is amine and polyamine biosynthesis; S-adenosylmethioninamine biosynthesis; S-adenosylmethioninamine from S-adenosyl-L-methionine: step 1/1. Catalyzes the decarboxylation of S-adenosylmethionine to S-adenosylmethioninamine (dcAdoMet), the propylamine donor required for the synthesis of the polyamines spermine and spermidine from the diamine putrescine. In Methanococcus vannielii (strain ATCC 35089 / DSM 1224 / JCM 13029 / OCM 148 / SB), this protein is S-adenosylmethionine decarboxylase proenzyme.